A 179-amino-acid chain; its full sequence is Large ribosomal subunit protein uL5c (179 aa).

This sequence belongs to the universal ribosomal protein uL5 family. As to quaternary structure, part of the 50S ribosomal subunit; contacts the 5S rRNA.

Its subcellular location is the plastid. Its function is as follows. Binds 5S rRNA, forms part of the central protuberance of the 50S subunit. The polypeptide is Large ribosomal subunit protein uL5c (rpl5) (Euglena longa (Euglenophycean alga)).